A 617-amino-acid chain; its full sequence is Vacuolar protein sorting-associated protein 33B (617 aa).

The protein belongs to the STXBP/unc-18/SEC1 family. As to quaternary structure, probable core component of the class C core vacuole/endosome tethering (CORVET) complex. The common core is composed of the class C Vps proteins vps-11, vps-16 and vps-18, and which further associates with vps-8 and vps-33.2. Interacts with spe-39. In terms of tissue distribution, broadly expressed in somatic tissues including the pharynx, intestine, spermatheca, and in coelomocytes. Expressed in the lining of the gut lumen.

Its subcellular location is the early endosome. The protein localises to the late endosome membrane. It is found in the lysosome membrane. The protein resides in the cytoplasmic vesicle. It localises to the clathrin-coated vesicle. Its subcellular location is the recycling endosome. Its function is as follows. Plays a role in vesicle-mediated protein trafficking to lysosomal compartments and in membrane docking/fusion reactions of late endosomes/lysosomes. Believed to act as a component of the putative CORVET endosomal tethering complex which is proposed to be involved in the rab-5-to-rab-7 endosome conversion probably implicating sand-1, and via binding SNAREs and SNARE complexes to mediate tethering and docking events during SNARE-mediated membrane fusion. The CORVET complex is proposed to function as a rab-5 effector to mediate early endosome fusion probably in specific endosome subpopulations. Most likely within the CORVET complex, it is involved in the fusion of endocytic compartments. Required for sperm development and function. This is Vacuolar protein sorting-associated protein 33B from Caenorhabditis elegans.